Reading from the N-terminus, the 308-residue chain is Acetaldehyde dehydrogenase (308 aa).

Residue 10–13 participates in NAD(+) binding; the sequence is SGNI. C128 acts as the Acyl-thioester intermediate in catalysis. NAD(+)-binding positions include 159–167 and N285; that span reads SAGPGTRAN.

This sequence belongs to the acetaldehyde dehydrogenase family.

The enzyme catalyses acetaldehyde + NAD(+) + CoA = acetyl-CoA + NADH + H(+). The chain is Acetaldehyde dehydrogenase from Salinispora tropica (strain ATCC BAA-916 / DSM 44818 / JCM 13857 / NBRC 105044 / CNB-440).